The following is a 146-amino-acid chain: Copper transporter 5 (146 aa).

Residues 24–44 (WLSYILTLIACFVFSAFYQYL) traverse the membrane as a helical segment. The tract at residues 55–74 (SSSRRAPPPPRSSSGVSAPL) is disordered. Residues 101–121 (LLMLAAMSFNGGVFIAIVVGL) traverse the membrane as a helical segment.

Belongs to the copper transporter (Ctr) (TC 1.A.56) family. SLC31A subfamily. In terms of tissue distribution, highly expressed in leaves and stems and at lower levels in roots and flowers.

Its subcellular location is the membrane. Its function is as follows. Involved in the transport of copper. In Arabidopsis thaliana (Mouse-ear cress), this protein is Copper transporter 5 (COPT5).